Here is a 188-residue protein sequence, read N- to C-terminus: Peptidyl-tRNA hydrolase (188 aa).

Tyrosine 14 is a tRNA binding site. The active-site Proton acceptor is the histidine 19. Tyrosine 64, asparagine 66, and asparagine 112 together coordinate tRNA.

This sequence belongs to the PTH family. As to quaternary structure, monomer.

It is found in the cytoplasm. The enzyme catalyses an N-acyl-L-alpha-aminoacyl-tRNA + H2O = an N-acyl-L-amino acid + a tRNA + H(+). Functionally, hydrolyzes ribosome-free peptidyl-tRNAs (with 1 or more amino acids incorporated), which drop off the ribosome during protein synthesis, or as a result of ribosome stalling. Catalyzes the release of premature peptidyl moieties from peptidyl-tRNA molecules trapped in stalled 50S ribosomal subunits, and thus maintains levels of free tRNAs and 50S ribosomes. The sequence is that of Peptidyl-tRNA hydrolase from Clostridium perfringens (strain ATCC 13124 / DSM 756 / JCM 1290 / NCIMB 6125 / NCTC 8237 / Type A).